The sequence spans 321 residues: Polyamine aminopropyltransferase (321 aa).

In terms of domain architecture, PABS spans 23 to 256 (HLLYLEHAGP…DEWSFSFGSD (234 aa)). Position 53 (glutamine 53) interacts with S-methyl-5'-thioadenosine. 2 residues coordinate spermidine: histidine 84 and aspartate 108. Residues glutamate 127 and 159–160 (DG) contribute to the S-methyl-5'-thioadenosine site. Catalysis depends on aspartate 177, which acts as the Proton acceptor.

Belongs to the spermidine/spermine synthase family. Homodimer or homotetramer.

It is found in the cytoplasm. The catalysed reaction is S-adenosyl 3-(methylsulfanyl)propylamine + putrescine = S-methyl-5'-thioadenosine + spermidine + H(+). The protein operates within amine and polyamine biosynthesis; spermidine biosynthesis; spermidine from putrescine: step 1/1. In terms of biological role, catalyzes the irreversible transfer of a propylamine group from the amino donor S-adenosylmethioninamine (decarboxy-AdoMet) to putrescine (1,4-diaminobutane) to yield spermidine. The protein is Polyamine aminopropyltransferase of Korarchaeum cryptofilum (strain OPF8).